A 432-amino-acid chain; its full sequence is E3 ubiquitin-protein ligase RNF135 (432 aa).

The RING-type zinc finger occupies 21 to 63 (CIICQGLLDWPATLPCGHSFCRHCLEALWGARDARRWACPTCR). Residues 95-121 (GSDPAHCPCPGSSSLSSAAARPRRRPE) are disordered. Residues 102–114 (PCPGSSSLSSAAA) are compositionally biased toward low complexity. Coiled coils occupy residues 121-156 (ELQR…QNQR) and 191-216 (DTAA…ESVT). Residues 241–432 (PDQSHPALRR…NYLIIKQVKV (192 aa)) enclose the B30.2/SPRY domain.

In terms of assembly, homodimer. Interacts (homodimer) with RIGI (double-stranded RNA-bound oligomeric form); involved in both RIGI ubiquitination, oligomerization into filaments associated with viral RNAs and the bridging of these filaments. Interacts with UBE2D3 and UBE2N; E2 ubiquitin ligases involved in RNF135-mediated ubiquitination of RIGI and activation of the RIG-I signaling pathway. Interacts with PCBP2. In terms of processing, (Microbial infection) Cleaved and inactivated by hepatitis C virus NS3/NS4A. As to expression, expressed in skeletal muscle, spleen, kidney, placenta, prostate, stomach, thyroid and tongue. Also weakly expressed in heart, thymus, liver and lung.

It is found in the cytoplasm. It localises to the stress granule. The catalysed reaction is S-ubiquitinyl-[E2 ubiquitin-conjugating enzyme]-L-cysteine + [acceptor protein]-L-lysine = [E2 ubiquitin-conjugating enzyme]-L-cysteine + N(6)-ubiquitinyl-[acceptor protein]-L-lysine.. It functions in the pathway protein modification; protein ubiquitination. E2-dependent E3 ubiquitin-protein ligase that functions as a RIGI coreceptor in the sensing of viral RNAs in cell cytoplasm and the activation of the antiviral innate immune response. Together with the UBE2D3, UBE2N and UB2V1 E2 ligases, catalyzes the 'Lys-63'-linked polyubiquitination of RIGI oligomerized on viral RNAs, an essential step in the activation of the RIG-I signaling pathway. Through a ubiquitin-independent parallel mechanism, which consists in bridging RIGI filaments forming on longer viral RNAs, further activates the RIG-I signaling pathway. This second mechanism that synergizes with the ubiquitin-dependent one would thereby allow an RNA length-dependent regulation of the RIG-I signaling pathway. Associated with the E2 ligase UBE2N, also constitutively synthesizes unanchored 'Lys-63'-linked polyubiquitin chains that may also activate the RIG-I signaling pathway. The polypeptide is E3 ubiquitin-protein ligase RNF135 (Homo sapiens (Human)).